Here is a 313-residue protein sequence, read N- to C-terminus: Bifunctional pinoresinol-lariciresinol reductase 1 (313 aa).

NADP(+)-binding positions include 11 to 17 (GGTGYIG), R36, and K45. Catalysis depends on K138, which acts as the Proton acceptor. R142 is an NADP(+) binding site. Substrate is bound at residue H271.

The protein belongs to the NmrA-type oxidoreductase family. Isoflavone reductase subfamily. Dimer.

The enzyme catalyses (+)-lariciresinol + NADP(+) = (+)-pinoresinol + NADPH + H(+). The catalysed reaction is (-)-lariciresinol + NADP(+) = (-)-pinoresinol + NADPH + H(+). It catalyses the reaction (+)-secoisolariciresinol + NADP(+) = (-)-lariciresinol + NADPH + H(+). Its function is as follows. Reductase involved in lignan biosynthesis. Catalyzes the enantioselective sequential conversion of (-)-pinoresinol into (-)-lariciresinol and of (-)-lariciresinol into (+)-secoisolariciresinol. Can also convert with a lower efficiency (+)-pinoresinol into (+)-lariciresinol, but not (+)-lariciresinol into (-)-secoisolariciresinol. Abstracts the 4R-hydride from the NADPH cofactor during catalysis. The sequence is that of Bifunctional pinoresinol-lariciresinol reductase 1 (PLR_Tp1) from Thuja plicata (Western red-cedar).